The chain runs to 161 residues: Regulator of ribonuclease activity A (161 aa).

This sequence belongs to the RraA family. Homotrimer. Binds to both RNA-binding sites in the C-terminal region of Rne and to RhlB.

Its subcellular location is the cytoplasm. In terms of biological role, globally modulates RNA abundance by binding to RNase E (Rne) and regulating its endonucleolytic activity. Can modulate Rne action in a substrate-dependent manner by altering the composition of the degradosome. Modulates RNA-binding and helicase activities of the degradosome. The sequence is that of Regulator of ribonuclease activity A from Shigella dysenteriae serotype 1 (strain Sd197).